Here is a 299-residue protein sequence, read N- to C-terminus: Acetylglutamate kinase (299 aa).

Substrate contacts are provided by residues 72–73 (GG), Arg-94, and Asn-196.

This sequence belongs to the acetylglutamate kinase family. ArgB subfamily.

The protein resides in the cytoplasm. It catalyses the reaction N-acetyl-L-glutamate + ATP = N-acetyl-L-glutamyl 5-phosphate + ADP. Its pathway is amino-acid biosynthesis; L-arginine biosynthesis; N(2)-acetyl-L-ornithine from L-glutamate: step 2/4. Its function is as follows. Catalyzes the ATP-dependent phosphorylation of N-acetyl-L-glutamate. This is Acetylglutamate kinase from Burkholderia vietnamiensis (strain G4 / LMG 22486) (Burkholderia cepacia (strain R1808)).